A 119-amino-acid chain; its full sequence is Large ribosomal subunit protein uL22c (119 aa).

It belongs to the universal ribosomal protein uL22 family. In terms of assembly, part of the 50S ribosomal subunit.

It is found in the plastid. The protein localises to the chloroplast. This protein binds specifically to 23S rRNA. Its function is as follows. The globular domain of the protein is located near the polypeptide exit tunnel on the outside of the subunit, while an extended beta-hairpin is found that lines the wall of the exit tunnel in the center of the 70S ribosome. This chain is Large ribosomal subunit protein uL22c (rpl22), found in Spirogyra maxima (Green alga).